A 442-amino-acid chain; its full sequence is Protein PHYTOCHROME KINASE SUBSTRATE 2 (442 aa).

Residues Ile-110–Glu-130 are disordered. A compositionally biased stretch (low complexity) spans Ser-121 to Glu-130. Phosphoserine is present on residues Ser-239 and Ser-245. A disordered region spans residues Val-394–Thr-442. A compositionally biased stretch (polar residues) spans Asp-397 to Pro-406. Low complexity predominate over residues Ser-428 to Thr-442.

This sequence belongs to the PKS family. Interacts with PKS1, RPT3, PHOT1 and PHOT2. Expressed in leaves, with the strongest expression on edges of the laminas. Not found in roots.

The protein resides in the cell membrane. Functionally, acts predominantly in the phot1 pathway. Involved in the leaf positioning and also in the phot2 pathway controlling the leaf flattening. Component of the network that modulates the very low-fluence response (VLFR) branch of phyA signaling. Regulates phytochrome-mediated photomorphogenesis and hypocotyl phototropism. May act by controlling auxin homeostasis. This chain is Protein PHYTOCHROME KINASE SUBSTRATE 2 (PKS2), found in Arabidopsis thaliana (Mouse-ear cress).